The primary structure comprises 77 residues: Large ribosomal subunit protein bL28 (77 aa).

Belongs to the bacterial ribosomal protein bL28 family.

The sequence is that of Large ribosomal subunit protein bL28 from Polynucleobacter asymbioticus (strain DSM 18221 / CIP 109841 / QLW-P1DMWA-1) (Polynucleobacter necessarius subsp. asymbioticus).